The primary structure comprises 347 residues: Sensor protein VraS (347 aa).

The next 2 membrane-spanning stretches (helical) occupy residues 13 to 33 (ILVY…VNIM) and 43 to 63 (IFGI…CIIV). The Histidine kinase domain occupies 150 to 341 (RLARELHDSV…RIEVKAPLNK (192 aa)).

The protein resides in the cell membrane. The catalysed reaction is ATP + protein L-histidine = ADP + protein N-phospho-L-histidine.. Functionally, member of the two-component regulatory system VraS/VraR involved in the control of the cell wall peptidoglycan biosynthesis. Probably activates VraR by phosphorylation. The protein is Sensor protein VraS (vraS) of Staphylococcus saprophyticus subsp. saprophyticus (strain ATCC 15305 / DSM 20229 / NCIMB 8711 / NCTC 7292 / S-41).